A 1506-amino-acid polypeptide reads, in one-letter code: MALQDLGENLQPWCPLGLSLEWVKTVWDLDFTEIEPLDPSIVGEILETGRDAFTKLYGSLFPFATDESGSLESIWTFFTENDISSNTLVALFCHFVQEAHKKSASAQYREYGLHAAGLYFLLLEIPGIVVNQVFHPVMFDKCIQILKRSWPQESNLTQKRKKDHSKSSKDNYRKSRKRGKPPRKEDYQVDELSREEEEEEEEIYFSGRDLCQIRDAIFNLLKNFLRLLPKFSLKEKPQSIQTCIEVFVALTSFEPIPHKFLISQARNLNEVKHISELAYYGLYLLCSPVHGEENKVIGSIFHQMLNVILMLEVGEGSRCAPLAITSQVINCRNQAVQFVSSLVDELQASVYPVLGTLLQHICAKVVDKAEYRTYAAQSLVQLLTKLPSEEYATFIAWLYKYSRSSKIPHRVFTLDVALALLTLPERELDDTVSLEHQKFLKHKFFVQEIIFDRCLDKAPTVRSKALSSFAHCLELSSSNTSESILEIFINSNLVPGIQNLSNTVLNPSPVLTSRNGYSAQSRTHNNDEQTLPGERCFMTMLRKRIKDEKINVRKSALQVLMSILKHCDILSMEQDLLILQDHCRDPAISVRKQALQSLTELVMAQPTCVPVQKAWLMGVIPVVMDCESTVQEKALECLDQLLLQNIKHHKKFHSADRSQVLAWSLLALLTIENQDLRRYLNKAFHIWSKKDKFSSTFINSVISHTDTERSAPAWMLLSKITCSSPKLDYTKIIESWERLSREQSPNSNTLGYMLCVIGHIAKHLPKGTRDKITGVIKAKLNGFQWSPELISSSVDALQKLCRASAKTVLEEQGLLKQVCGDVLATCEQHLSNILLKEDGTGNMDEGLVVKCIFTLGDIAQLCPAIVEKRVFLLIQSILASSAHSDHLPSSQGTTDALDSQPPFQPRSSAMPSVIRAHAIITLGKLCLQHEDLAKKSIPALVRELEVSEDVAVRNNVIIVICDLCIRYTVMVDNYIPNISVCLKDSDPFIRKQTLVLLTNLLQEEYVKWKGSLFFRFVSTLVDSHPDIASLGEFCLAHLLLKRNPTMFFQHFIECIFHFNSYEKHGQYNKFSQSERGKQLFLLKGKTNKEKRMRIYKFLLEHFTDEQRFNVTSKICLNILACFTDGILPMDMEASELLSDTFDILNSKEIKLLAMRAQTSKDLLEEDDVALANVVMQEAQMKIISQVQKRNFIENIIPIIISLKTVLEKNKIPALRELMNYLREVMQDYRDEINDFFAVDKQLASELEYDMKKYNEQLAQEQALTEHANATKGPEDSDRVPSAQVAPDLEAVPALAAAPMAAAAAAAPMAAAAAAAGQDNADVPPTQSRPSAPRSNFTPTLPPISENGPLKIMSSTRPMSLSTIAILNSVKKAVASKNRTRSLGALPFNVETGSPENPSSHESSLSLEKESDRTVNHVTKRAISTPENSISDVTFAAGVSYIGTPATFFTKEKHEAQEQGSDILCLSLLDKRPPQSPQWNVKSPARSHGSTRSSRRSLRKAPLKTAN.

A disordered region spans residues 154-194 (SNLTQKRKKDHSKSSKDNYRKSRKRGKPPRKEDYQVDELSR). HEAT repeat units follow at residues 442-476 (HKFFVQEIIFDRCLDKAPTVRSKALSSFAHCLELS), 532-567 (PGERCFMTMLRKRIKDEKINVRKSALQVLMSILKHC), and 574-605 (QDLLILQDHCRDPAISVRKQALQSLTELVMAQ). Serine 562 carries the phosphoserine modification. Residues 884-897 (SDHLPSSQGTTDAL) are compositionally biased toward polar residues. A disordered region spans residues 884 to 908 (SDHLPSSQGTTDALDSQPPFQPRSS). The stretch at 968–1004 (TVMVDNYIPNISVCLKDSDPFIRKQTLVLLTNLLQEE) is one HEAT 4 repeat. Residues 1213–1270 (ALRELMNYLREVMQDYRDEINDFFAVDKQLASELEYDMKKYNEQLAQEQALTEHANAT) are a coiled coil. A disordered region spans residues 1317-1353 (QDNADVPPTQSRPSAPRSNFTPTLPPISENGPLKIMS). Positions 1324 to 1338 (PTQSRPSAPRSNFTP) are enriched in polar residues. 4 positions are modified to phosphoserine: serine 1359, serine 1368, serine 1381, and serine 1393. 2 disordered regions span residues 1385 to 1412 (LPFNVETGSPENPSSHESSLSLEKESDR) and 1473 to 1506 (PQSPQWNVKSPARSHGSTRSSRRSLRKAPLKTAN). A compositionally biased stretch (low complexity) spans 1393–1405 (SPENPSSHESSLS). Over residues 1492–1506 (SSRRSLRKAPLKTAN) the composition is skewed to basic residues.

Component of the condensin-2 complex, which contains the SMC2 and SMC4 heterodimer, and 3 non SMC subunits that probably regulate the complex: NCAPH2, NCAPD3 and NCAPG2.

The protein resides in the nucleus. Regulatory subunit of the condensin-2 complex, a complex which establishes mitotic chromosome architecture and is involved in physical rigidity of the chromatid axis. May promote the resolution of double-strand DNA catenanes (intertwines) between sister chromatids. Condensin-mediated compaction likely increases tension in catenated sister chromatids, providing directionality for type II topoisomerase-mediated strand exchanges toward chromatid decatenation. Specifically required for decatenation of centromeric ultrafine DNA bridges during anaphase. Early in neurogenesis, may play an essential role to ensure accurate mitotic chromosome condensation in neuron stem cells, ultimately affecting neuron pool and cortex size. The chain is Condensin-2 complex subunit D3 (Ncapd3) from Mus musculus (Mouse).